The primary structure comprises 157 residues: MAVAEFEITSSLSPSNIFKAFVIDFDTIAPKAEPETYKSIKTIEGDGGVGTIKSITYSDGVPFTSSKHKVDAIDSNNFSISYTIFEGDVLMGIIESGTHHLKFLPSADGGSVYKHSMVFKCKGDAKLTDENVSLMKEGLKKTFKAIETYVISHPEAC.

The protein belongs to the BetVI family.

The protein is Root allergen protein of Taraxacum officinale (Common dandelion).